A 647-amino-acid polypeptide reads, in one-letter code: DNA ligase (647 aa).

NAD(+)-binding positions include 30 to 34, 79 to 80, and glutamate 106; these read DEEYD and SM. The N6-AMP-lysine intermediate role is filled by lysine 108. Arginine 129, glutamate 163, and lysine 301 together coordinate NAD(+). Residues cysteine 395, cysteine 398, cysteine 411, and cysteine 416 each contribute to the Zn(2+) site. The 79-residue stretch at 569–647 folds into the BRCT domain; it reads SISNALSGKT…SEYERLKLEV (79 aa).

The protein belongs to the NAD-dependent DNA ligase family. LigA subfamily. Mg(2+) is required as a cofactor. The cofactor is Mn(2+).

The enzyme catalyses NAD(+) + (deoxyribonucleotide)n-3'-hydroxyl + 5'-phospho-(deoxyribonucleotide)m = (deoxyribonucleotide)n+m + AMP + beta-nicotinamide D-nucleotide.. DNA ligase that catalyzes the formation of phosphodiester linkages between 5'-phosphoryl and 3'-hydroxyl groups in double-stranded DNA using NAD as a coenzyme and as the energy source for the reaction. It is essential for DNA replication and repair of damaged DNA. This is DNA ligase from Campylobacter concisus (strain 13826).